The chain runs to 161 residues: Nucleotide-binding protein Pfl01_4421 (161 aa).

The protein belongs to the YajQ family.

Nucleotide-binding protein. This is Nucleotide-binding protein Pfl01_4421 from Pseudomonas fluorescens (strain Pf0-1).